A 92-amino-acid chain; its full sequence is Large ribosomal subunit protein bL25 (92 aa).

The protein belongs to the bacterial ribosomal protein bL25 family. As to quaternary structure, part of the 50S ribosomal subunit; part of the 5S rRNA/L5/L18/L25 subcomplex. Contacts the 5S rRNA. Binds to the 5S rRNA independently of L5 and L18.

This is one of the proteins that binds to the 5S RNA in the ribosome where it forms part of the central protuberance. The protein is Large ribosomal subunit protein bL25 of Vibrio campbellii (strain ATCC BAA-1116).